We begin with the raw amino-acid sequence, 910 residues long: MSRFFANGSESESESSEEEIQATNFNKASAFQFSDDEEEVKRVVRSTKEKRYENLTSIIKTIRNHKKIKDIPNTLSSFEDLTRAYQKALPVISKEENGITPRFYIRCLAELEDFINEVWEDREGRKNLSKNNSKSLGTLRQKVRKYIKDFEDDLSRFREAPDQESEAEDEVVALESDGGDAGDDSDAGVKPTEAAPKAVKSAPAKAAPADDDDSDDSIDWDSDSESETESSDDENQYQNMRERFLKRTTEKEEKDDDKRKDKRKEQKTKIRKRAEDDEDGEWETVVKGHVVEKPKMFEKDAEIDVPLVLAKLLEIMSARGKKRTDRRLQIDLLFELRDISDQHNLGTAVSVKIHFNIISAIYDYNQKISEPMKLEHWALLLEVMQSMMKLLLANADIIMSESVAEEHEEYATSPFYVRGCPLAAVERLDDEFVKLLKECDPHSNDYVSRLKDEVNVVKTIELVLQYFERSGTNNERCRIYLRKIEHLYYKFDPEVLKKKRGELPATTSTSVDVMDKLCKFIYAKDDTDRIRTRAILAHIYHHAMHDNWFQARDLVLMSHLQDNIDAADPATRILYNRMMANLGLCAFRQGNVKDAHHCLVDLMVTGKPKELLAQGLLPQRQHERSAEQEKIEKQRQMPFHMHINLELLECVYLVSAMLLEIPYIAAHEFDARRRMISKTFYQQLRSSERQSLVGPPESMREHVVAAAKAMRCGNWQACANFIVNKKMNTKVWDLFYESDRVREMLTKFIKEESLRTYLFTYSNVYTSISIPSLAQMYELPVPKVHSIISKMIINEELMASLDDPSETVGMHRSEPSRLQALAMQFVDKVTNLVDVNEKVFDMKQGNFFQRGNMGNRGDRGYNRNQNNQGGNWLGQRRDRNNRNRNQRGHHKNNQDRQQQQQQQVQTIDEE.

A disordered region spans residues 1 to 21 (MSRFFANGSESESESSEEEIQ). Over residues 11 to 20 (SESESSEEEI) the composition is skewed to acidic residues. S34, S165, S176, and S185 each carry phosphoserine. A disordered region spans residues 157–281 (FREAPDQESE…KRAEDDEDGE (125 aa)). The segment covering 162–186 (DQESEAEDEVVALESDGGDAGDDSD) has biased composition (acidic residues). Residues 193–207 (EAAPKAVKSAPAKAA) are compositionally biased toward low complexity. Positions 209–235 (ADDDDSDDSIDWDSDSESETESSDDEN) are enriched in acidic residues. Basic and acidic residues predominate over residues 240 to 268 (MRERFLKRTTEKEEKDDDKRKDKRKEQKT). The PCI domain maps to 639 to 815 (FHMHINLELL…ETVGMHRSEP (177 aa)). The segment at 847-910 (FFQRGNMGNR…QQQVQTIDEE (64 aa)) is disordered. A compositionally biased stretch (low complexity) spans 862–874 (NRNQNNQGGNWLG). Residues 882-891 (RNRNQRGHHK) show a composition bias toward basic residues. Residues 895-910 (DRQQQQQQQVQTIDEE) show a composition bias toward low complexity.

It belongs to the eIF-3 subunit C family. As to quaternary structure, component of the eukaryotic translation initiation factor 3 (eIF-3) complex. The eIF-3 complex interacts with pix.

The protein localises to the cytoplasm. Component of the eukaryotic translation initiation factor 3 (eIF-3) complex, which is involved in protein synthesis of a specialized repertoire of mRNAs and, together with other initiation factors, stimulates binding of mRNA and methionyl-tRNAi to the 40S ribosome. The eIF-3 complex specifically targets and initiates translation of a subset of mRNAs involved in cell proliferation. This chain is Eukaryotic translation initiation factor 3 subunit C, found in Drosophila sechellia (Fruit fly).